Consider the following 311-residue polypeptide: Aspartate carbamoyltransferase catalytic subunit (311 aa).

2 residues coordinate carbamoyl phosphate: Arg55 and Thr56. Lys85 serves as a coordination point for L-aspartate. Arg106, His135, and Gln138 together coordinate carbamoyl phosphate. Positions 168 and 230 each coordinate L-aspartate. Carbamoyl phosphate contacts are provided by Leu268 and Pro269.

It belongs to the aspartate/ornithine carbamoyltransferase superfamily. ATCase family. As to quaternary structure, heterododecamer (2C3:3R2) of six catalytic PyrB chains organized as two trimers (C3), and six regulatory PyrI chains organized as three dimers (R2).

The catalysed reaction is carbamoyl phosphate + L-aspartate = N-carbamoyl-L-aspartate + phosphate + H(+). Its pathway is pyrimidine metabolism; UMP biosynthesis via de novo pathway; (S)-dihydroorotate from bicarbonate: step 2/3. Functionally, catalyzes the condensation of carbamoyl phosphate and aspartate to form carbamoyl aspartate and inorganic phosphate, the committed step in the de novo pyrimidine nucleotide biosynthesis pathway. The protein is Aspartate carbamoyltransferase catalytic subunit of Salmonella paratyphi C (strain RKS4594).